Reading from the N-terminus, the 931-residue chain is Protein unc-45 homolog B (931 aa).

3 TPR repeats span residues 6–39 (AVQL…TKDK), 43–76 (ATLY…NSSD), and 77–110 (IKAL…EPRN). ARM repeat units lie at residues 169–208 (EAGA…GMCS), 211–250 (QARA…AIID), and 751–790 (DKLR…NMVL).

Interacts with HSP90 in an ATP-independent manner. Interacts with UBE4B; the interaction may target UNC45B for proteasomal degradation. As to expression, expressed in eye lens tissues. Expressed in muscle (at protein level).

Its subcellular location is the cytoplasm. It localises to the myofibril. The protein localises to the sarcomere. The protein resides in the z line. It is found in the a band. Its subcellular location is the perinuclear region. It localises to the cytosol. In terms of biological role, acts as a co-chaperone for HSP90 and is required for proper folding of the myosin motor domain. Plays a role in sarcomere formation during muscle cell development. Is necessary for normal early lens development. The polypeptide is Protein unc-45 homolog B (Homo sapiens (Human)).